The chain runs to 733 residues: Putative cyclic nucleotide-gated ion channel 9 (733 aa).

Residues 1–117 (MLDCGKKAVK…DKFLLLCNKL (117 aa)) lie on the Cytoplasmic side of the membrane. The helical transmembrane segment at 118–138 (FVTSCILAVSVDPLFLYLPFV) threads the bilayer. Residues 139 to 151 (KDNEKCIGIDRKL) are Extracellular-facing. A helical transmembrane segment spans residues 152-172 (AIIATTLRTVIDAFYLFHMAL). Residues 173–207 (RFRTAFVAPSSRVFGRGELVIDPAQIAKRYLQQYF) are Cytoplasmic-facing. A helical membrane pass occupies residues 208 to 228 (IIDFLSVLPLPQIVVWRFLYI). The Extracellular segment spans residues 229–239 (SKGASVLATKR). A helical transmembrane segment spans residues 240–260 (ALRSIILVQYIPRFIRLYPLS). The Cytoplasmic segment spans residues 261-280 (SELKRTAGVFAETAWAGAAY). Residues 281–301 (YLLLYMLASHIVGAIWYLLAL) form a helical membrane-spanning segment. The Extracellular portion of the chain corresponds to 302 to 406 (ERYNGCWTKV…GQGLETSTYP (105 aa)). A helical membrane pass occupies residues 407 to 427 (GEVIFSIALAIAGLLLFALLI). The Cytoplasmic portion of the chain corresponds to 428 to 733 (GNMQTYLQSL…EPDFSADDTS (306 aa)). A nucleoside 3',5'-cyclic phosphate contacts are provided by residues 513–637 (LFEN…SRQV) and Glu584. The tract at residues 629 to 644 (FRRLHSRQVQHTFRFY) is calmodulin-binding. The region spanning 649–678 (RTWAAIFIQAAWRRYVKKKKLEQLRKEEEE) is the IQ domain.

It belongs to the cyclic nucleotide-gated cation channel (TC 1.A.1.5) family. In terms of assembly, homotetramer or heterotetramer.

Its subcellular location is the cell membrane. Functionally, putative cyclic nucleotide-gated ion channel. The sequence is that of Putative cyclic nucleotide-gated ion channel 9 (CNGC9) from Arabidopsis thaliana (Mouse-ear cress).